We begin with the raw amino-acid sequence, 359 residues long: RNA-binding protein 4B (359 aa).

2 consecutive RRM domains span residues Val-2–Asn-72 and Thr-78–Ser-148. The CCHC-type zinc finger occupies Ser-160–Val-177. The interval Ala-196–Phe-359 is interaction with TNPO3.

In terms of assembly, interacts with TNPO3, which may mediate nuclear import of the protein.

The protein localises to the nucleus. Its subcellular location is the nucleolus. In terms of biological role, required for the translational activation of PER1 mRNA in response to circadian clock. Binds directly to the 3'-UTR of the PER1 mRNA. This is RNA-binding protein 4B (RBM4B) from Sus scrofa (Pig).